The chain runs to 276 residues: Large ribosomal subunit protein uL2 (276 aa).

Residues alanine 223 to lysine 276 form a disordered region. Over residues lysine 263–lysine 276 the composition is skewed to basic and acidic residues.

It belongs to the universal ribosomal protein uL2 family. As to quaternary structure, part of the 50S ribosomal subunit. Forms a bridge to the 30S subunit in the 70S ribosome.

Its function is as follows. One of the primary rRNA binding proteins. Required for association of the 30S and 50S subunits to form the 70S ribosome, for tRNA binding and peptide bond formation. It has been suggested to have peptidyltransferase activity; this is somewhat controversial. Makes several contacts with the 16S rRNA in the 70S ribosome. In Fusobacterium nucleatum subsp. nucleatum (strain ATCC 25586 / DSM 15643 / BCRC 10681 / CIP 101130 / JCM 8532 / KCTC 2640 / LMG 13131 / VPI 4355), this protein is Large ribosomal subunit protein uL2.